Here is a 973-residue protein sequence, read N- to C-terminus: ATP-dependent DNA helicase homolog RECG1, chloroplastic/mitochondrial (973 aa).

Positions 1-208 (MAAVTLSPCS…ATSEVEATSD (208 aa)) are sufficient for chloroplastic and mitochondrial trgeting. Residues 174 to 200 (LLQNDDSSDPREDILDDGSSFTSKTAT) form a disordered region. The 190-residue stretch at 536-725 (DLKRPVPMNR…LYGDISLTQI (190 aa)) folds into the Helicase ATP-binding domain. 549-556 (GDVGCGKT) contacts ATP. Residues 655–658 (DEQQ) carry the DEQQ box motif. The 159-residue stretch at 746-904 (GIKEVYSMML…GFYLANIDLL (159 aa)) folds into the Helicase C-terminal domain.

The protein belongs to the helicase family. RecG subfamily. As to expression, expressed in most tissues, not seen in pollen, ovules or developing seeds.

The protein localises to the plastid. It localises to the chloroplast. Its subcellular location is the mitochondrion. It carries out the reaction Couples ATP hydrolysis with the unwinding of duplex DNA by translocating in the 3'-5' direction.. The enzyme catalyses ATP + H2O = ADP + phosphate + H(+). Functionally, plays a critical role in recombination and DNA repair. Helps process Holliday junction (HJ) intermediates to mature products by catalyzing branch migration. Has replication fork regression activity, unwinds stalled or blocked replication forks to make a HJ that can be resolved. Has a DNA unwinding activity characteristic of a DNA helicase with 3'-5' polarity. Its function is as follows. Plays a role in recombination surveillance and repair of double-stranded (ds)DNA breaks in the mitochondrion. May be able to dissociate D- and R-loops. Able to complement UV sensitivity of a recG deletion in E.coli. The protein is ATP-dependent DNA helicase homolog RECG1, chloroplastic/mitochondrial of Arabidopsis thaliana (Mouse-ear cress).